We begin with the raw amino-acid sequence, 426 residues long: Endoglucanase Z (426 aa).

The first 43 residues, 1-43, serve as a signal peptide directing secretion; the sequence is MPLSYLDKNPVIDSKKHALRKKLFLSCAYFGLSLACLSSNAWA. The catalytic stretch occupies residues 44 to 332; sequence SVEPLSVNGN…VKSIIQSWPY (289 aa). The active-site Proton donor is the Glu-176. Glu-263 functions as the Nucleophile in the catalytic mechanism. The interval 333 to 366 is linker; the sequence is KAGSAASATTDPSTDTTTDTTVDEPTTTDTPATA. The interval 336-367 is disordered; that stretch reads SAASATTDPSTDTTTDTTVDEPTTTDTPATAD. A cellulose-binding region spans residues 367–426; sequence DCANANVYPNWVSKDWAGGQPTHNEAGQSIVYKGNLYTANWYTASVPGSDSSWTQVGSCN. A disulfide bond links Cys-368 and Cys-425.

The protein belongs to the glycosyl hydrolase 5 (cellulase A) family.

The protein localises to the secreted. The enzyme catalyses Endohydrolysis of (1-&gt;4)-beta-D-glucosidic linkages in cellulose, lichenin and cereal beta-D-glucans.. Represents 97% of the global cellulase activity. This Dickeya dadantii (strain 3937) (Erwinia chrysanthemi (strain 3937)) protein is Endoglucanase Z (celZ).